The chain runs to 269 residues: Regulatory protein RecX (269 aa).

It belongs to the RecX family.

Its subcellular location is the cytoplasm. In terms of biological role, modulates RecA activity. This Geobacillus kaustophilus (strain HTA426) protein is Regulatory protein RecX.